We begin with the raw amino-acid sequence, 1082 residues long: RhoGEF domain-containing protein gxcI (1082 aa).

Over residues 1 to 15 (MRKNSTSNPSPSHQF) the composition is skewed to polar residues. Disordered regions lie at residues 1-29 (MRKN…VNNN), 59-78 (DKNQ…VLPQ), 91-394 (YNEQ…VTSL), 438-488 (KQAS…SVSN), and 504-524 (INSF…SLSL). Composition is skewed to low complexity over residues 20–29 (KNTTTVVNNN), 62–71 (QQQQQQQQQQ), 96–109 (PSSS…SSSP), 116–160 (LLST…SGSP), and 170–184 (PTIL…RQLP). Residues 185–206 (TRPPSPLPKLPSRPTSPVPPNP) show a composition bias toward pro residues. Low complexity predominate over residues 211 to 244 (NTTTTNNNNNNNNNNNNNNNNNNNNNNNNNNNNN). The span at 262–276 (PIPPPNDKPAPPPRP) shows a compositional bias: pro residues. Low complexity predominate over residues 282-366 (TLTTPPTIAT…NNNNNSNNNK (85 aa)). The span at 367 to 379 (PLPPTSTKPPRPK) shows a compositional bias: pro residues. The span at 450–473 (SSLSLSTTPTSVSPSTPSSANPTP) shows a compositional bias: low complexity. One can recognise a DH domain in the interval 622–817 (SFNKVIKEII…EKIVNDINGK (196 aa)). Positions 838–994 (QQLRDQTFLK…NDIDEAINIL (157 aa)) are PH-like. Disordered regions lie at residues 920-961 (NNNN…NSTP) and 1017-1060 (NNNN…NSNN).

In terms of biological role, GTPase-activating protein. In Dictyostelium discoideum (Social amoeba), this protein is RhoGEF domain-containing protein gxcI (gxcI).